The chain runs to 257 residues: MNPLIIKLGGVLLDSEEALERLFTALVNYREAHQRPLIIVHGGGCVVDELMKQLNLPVKKKNGLRVTPADQIDIITGALAGTANKTLLAWAKKHGISSVGLFLGDGDSVKVTQLDAELGHVGLAQPGSPALINTLLAGGYLPVVSSIGVTDEGQLMNVNADQAATALAATLGADLILLSDVSGILDGKGQRIAEMTAEKAEQLIEQGIITDGMIVKVNAALDAARALGRPVDIASWRHAEQLPALFNGTPIGTRILA.

Residues 43-44, R65, and N157 each bind substrate; that span reads GG. ATP contacts are provided by residues 180–185 and 208–210; these read DVSGIL and IIT.

It belongs to the acetylglutamate kinase family. ArgB subfamily. In terms of assembly, homodimer.

The protein resides in the cytoplasm. It catalyses the reaction N-acetyl-L-glutamate + ATP = N-acetyl-L-glutamyl 5-phosphate + ADP. It participates in amino-acid biosynthesis; L-arginine biosynthesis; N(2)-acetyl-L-ornithine from L-glutamate: step 2/4. Its function is as follows. Catalyzes the ATP-dependent phosphorylation of N-acetyl-L-glutamate. This chain is Acetylglutamate kinase, found in Klebsiella pneumoniae (strain 342).